The following is a 238-amino-acid chain: Ribonuclease PH (238 aa).

Phosphate-binding positions include arginine 86 and 124–126 (GTR).

It belongs to the RNase PH family. In terms of assembly, homohexameric ring arranged as a trimer of dimers.

The enzyme catalyses tRNA(n+1) + phosphate = tRNA(n) + a ribonucleoside 5'-diphosphate. Phosphorolytic 3'-5' exoribonuclease that plays an important role in tRNA 3'-end maturation. Removes nucleotide residues following the 3'-CCA terminus of tRNAs; can also add nucleotides to the ends of RNA molecules by using nucleoside diphosphates as substrates, but this may not be physiologically important. Probably plays a role in initiation of 16S rRNA degradation (leading to ribosome degradation) during starvation. The protein is Ribonuclease PH of Brucella melitensis biotype 2 (strain ATCC 23457).